Reading from the N-terminus, the 158-residue chain is Glycine/sarcosine/betaine reductase complex component A (158 aa).

Selenocysteine 44 is an active-site residue. Position 44 (selenocysteine 44) is a non-standard amino acid, selenocysteine.

Belongs to the GrdA family. In terms of assembly, monomer. Component of the glycine, sarcosine and betaine reductase complexes, together with components B and C.

It carries out the reaction acetyl phosphate + [thioredoxin]-disulfide + NH4(+) + H2O = [thioredoxin]-dithiol + glycine + phosphate + H(+). It catalyses the reaction acetyl phosphate + methylamine + [thioredoxin]-disulfide + H2O = sarcosine + [thioredoxin]-dithiol + phosphate + H(+). The enzyme catalyses acetyl phosphate + trimethylamine + [thioredoxin]-disulfide + H2O = glycine betaine + [thioredoxin]-dithiol + phosphate + H(+). Functionally, in the first step of glycine, betaine and sarcosine reductases, the substrate is bound to component PB via a Schiff base intermediate. Then the PB-activated substrate is nucleophilically attacked by the selenol anion of component PA to transform it to a carboxymethylated selenoether and the respective amine. By action of component PC, acetyl phosphate is formed, leaving component PA in its oxidized state. Finally component PA becomes reduced by the thioredoxin system to start a new catalytic cycle of reductive deamination. This is Glycine/sarcosine/betaine reductase complex component A from Clostridium botulinum (strain ATCC 19397 / Type A).